The sequence spans 641 residues: ATP-dependent DNA helicase PIF1 (641 aa).

Residues 1–180 form a PINT region; sequence MLSGIEAAAG…LVKRPVEPQA (180 aa). Residues Ser-27 and Ser-151 each carry the phosphoserine modification. The tract at residues 167 to 641 is hydrolyzes ATP in the presence of both magnesium and single-stranded DNA; weak activity in the presence of RNA or double-stranded DNA; No unwinding activity; it reads PDTTLVKRPV…SDQENMDPIL (475 aa). The interval 173–192 is disordered; the sequence is KRPVEPQAGAEPSTEAPRWP. 228 to 235 serves as a coordination point for ATP; that stretch reads GSAGTGKS. A DNA-binding region spans residues 577-596; the sequence is QAYVALSRARSLQGLRVLDF. The disordered stretch occupies residues 622-641; sequence LESPDDDEAASDQENMDPIL. Residues 624–641 are compositionally biased toward acidic residues; that stretch reads SPDDDEAASDQENMDPIL.

Belongs to the helicase family. PIF1 subfamily. In terms of assembly, monomer. Interacts with telomerase. Mg(2+) is required as a cofactor. As to expression, weak ubiquitous expression.

The protein resides in the nucleus. The protein localises to the mitochondrion. It carries out the reaction Couples ATP hydrolysis with the unwinding of duplex DNA at the replication fork by translocating in the 5'-3' direction. This creates two antiparallel DNA single strands (ssDNA). The leading ssDNA polymer is the template for DNA polymerase III holoenzyme which synthesizes a continuous strand.. It catalyses the reaction ATP + H2O = ADP + phosphate + H(+). In terms of biological role, DNA-dependent ATPase and 5'-3' DNA helicase required for the maintenance of both mitochondrial and nuclear genome stability. Efficiently unwinds G-quadruplex (G4) DNA structures and forked RNA-DNA hybrids. Resolves G4 structures, preventing replication pausing and double-strand breaks (DSBs) at G4 motifs. Involved in the maintenance of telomeric DNA. Inhibits telomere elongation, de novo telomere formation and telomere addition to DSBs via catalytic inhibition of telomerase. Reduces the processivity of telomerase by displacing active telomerase from DNA ends. Releases telomerase by unwinding the short telomerase RNA/telomeric DNA hybrid that is the intermediate in the telomerase reaction. Possesses an intrinsic strand annealing activity. In Homo sapiens (Human), this protein is ATP-dependent DNA helicase PIF1.